A 299-amino-acid chain; its full sequence is Ectoine dioxygenase (299 aa).

The interval 1 to 40 (MTTTTTNVTDLYPTRGATEVATPRQDPVVWGSPDAPGPVS) is disordered. Gln133 is an L-ectoine binding site. A 2-oxoglutarate-binding site is contributed by Lys139. Residues His150, Asp152, and His251 each contribute to the Fe cation site.

The protein belongs to the PhyH family. EctD subfamily. Homodimer. It depends on Fe(2+) as a cofactor.

It catalyses the reaction L-ectoine + 2-oxoglutarate + O2 = 5-hydroxyectoine + succinate + CO2. Its function is as follows. Involved in the biosynthesis of 5-hydroxyectoine, called compatible solute, which helps organisms to survive extreme osmotic stress by acting as a highly soluble organic osmolyte. Catalyzes the 2-oxoglutarate-dependent selective hydroxylation of L-ectoine to yield (4S,5S)-5-hydroxyectoine. This Streptomyces coelicolor (strain ATCC BAA-471 / A3(2) / M145) protein is Ectoine dioxygenase.